Here is a 190-residue protein sequence, read N- to C-terminus: uncharacterized protein (190 aa).

One can recognise an HTH tetR-type domain in the interval 1-58 (MDKRILAETFRLIKQKGFSFTMNDLAAALGTSKRTLYAYYSSKDQLVEAVVEQFIAEM). The segment at residues 21–40 (TMNDLAAALGTSKRTLYAYY) is a DNA-binding region (H-T-H motif).

This is an uncharacterized protein from Bacillus subtilis (strain 168).